Here is a 147-residue protein sequence, read N- to C-terminus: Putative cystatin-9-like protein CST9LP1 (147 aa).

A signal peptide spans 1 to 28 (MWSLPPSRALSCAPLLLLFSFQFLVTYA). Cys-98 and Cys-108 are oxidised to a cystine. 2 N-linked (GlcNAc...) asparagine glycosylation sites follow: Asn-117 and Asn-139. Cys-122 and Cys-142 are joined by a disulfide.

Belongs to the cystatin family.

It localises to the secreted. This Homo sapiens (Human) protein is Putative cystatin-9-like protein CST9LP1 (CST9LP1).